The chain runs to 441 residues: Alpha-methylserine aldolase (441 aa).

Residue lysine 256 is modified to N6-(pyridoxal phosphate)lysine.

This sequence belongs to the SHMT family. Alpha-methylserine aldolase subfamily. As to quaternary structure, homodimer. Pyridoxal 5'-phosphate serves as cofactor.

The catalysed reaction is 2-methyl-L-serine = formaldehyde + L-alanine. In terms of biological role, catalyzes the reversible interconversion of alpha-methyl-L-serine to L-alanine and formaldehyde. The chain is Alpha-methylserine aldolase from Variovorax paradoxus.